The primary structure comprises 187 residues: Orotate phosphoribosyltransferase (187 aa).

5-phospho-alpha-D-ribose 1-diphosphate-binding positions include Arg-98, Lys-99, Lys-102, His-104, and Glu-128–Ser-136. Orotate contacts are provided by Thr-132 and Arg-160.

This sequence belongs to the purine/pyrimidine phosphoribosyltransferase family. PyrE subfamily. Homodimer. Mg(2+) serves as cofactor.

The enzyme catalyses orotidine 5'-phosphate + diphosphate = orotate + 5-phospho-alpha-D-ribose 1-diphosphate. It functions in the pathway pyrimidine metabolism; UMP biosynthesis via de novo pathway; UMP from orotate: step 1/2. In terms of biological role, catalyzes the transfer of a ribosyl phosphate group from 5-phosphoribose 1-diphosphate to orotate, leading to the formation of orotidine monophosphate (OMP). In Rhodopseudomonas palustris (strain ATCC BAA-98 / CGA009), this protein is Orotate phosphoribosyltransferase.